The sequence spans 338 residues: UPF0104 membrane protein MTH_1261 (338 aa).

8 consecutive transmembrane segments (helical) span residues 6–26, 36–56, 124–144, 149–169, 231–251, 254–274, 275–295, and 310–330; these read AILI…IGPG, DPVY…LFTL, LDTF…VLYF, WILA…FLAL, ISFL…TAFG, ISLL…MIPL, LPGG…YAGV, and ISFW…GSSV.

The protein belongs to the UPF0104 family.

The protein localises to the cell membrane. The sequence is that of UPF0104 membrane protein MTH_1261 from Methanothermobacter thermautotrophicus (strain ATCC 29096 / DSM 1053 / JCM 10044 / NBRC 100330 / Delta H) (Methanobacterium thermoautotrophicum).